Here is a 199-residue protein sequence, read N- to C-terminus: Adenylyl-sulfate kinase (199 aa).

The disordered stretch occupies residues 1–22; the sequence is MSESNHITWHDSEVTKKQRQHK. 34-41 contributes to the ATP binding site; that stretch reads GLSGSGKS. The active-site Phosphoserine intermediate is serine 108.

This sequence belongs to the APS kinase family.

The enzyme catalyses adenosine 5'-phosphosulfate + ATP = 3'-phosphoadenylyl sulfate + ADP + H(+). It participates in sulfur metabolism; hydrogen sulfide biosynthesis; sulfite from sulfate: step 2/3. In terms of biological role, catalyzes the synthesis of activated sulfate. The protein is Adenylyl-sulfate kinase of Staphylococcus epidermidis (strain ATCC 12228 / FDA PCI 1200).